The primary structure comprises 202 residues: Glycerol-3-phosphate acyltransferase (202 aa).

The next 6 helical transmembrane spans lie at 2-22 (MIIV…GFVI), 54-74 (FLVT…PLWL), 85-105 (FFTN…YPVY), 120-140 (VVLG…FIVL), 141-161 (KIFK…VIGS), and 162-182 (LIIQ…ILII).

The protein belongs to the PlsY family. Probably interacts with PlsX.

It localises to the cell membrane. It catalyses the reaction an acyl phosphate + sn-glycerol 3-phosphate = a 1-acyl-sn-glycero-3-phosphate + phosphate. It functions in the pathway lipid metabolism; phospholipid metabolism. Its function is as follows. Catalyzes the transfer of an acyl group from acyl-phosphate (acyl-PO(4)) to glycerol-3-phosphate (G3P) to form lysophosphatidic acid (LPA). This enzyme utilizes acyl-phosphate as fatty acyl donor, but not acyl-CoA or acyl-ACP. The chain is Glycerol-3-phosphate acyltransferase from Staphylococcus aureus (strain Mu3 / ATCC 700698).